The chain runs to 255 residues: NAD-dependent protein deacylase (255 aa).

Residues 1-253 (MIEEAPRIIA…VKVKRCLENK (253 aa)) form the Deacetylase sirtuin-type domain. 20-39 (GAGVSAESGIPTFRDRGGLW) provides a ligand contact to NAD(+). Tyrosine 64 and arginine 67 together coordinate substrate. An NAD(+)-binding site is contributed by 98–101 (QNID). The Proton acceptor role is filled by histidine 116. Zn(2+) contacts are provided by cysteine 124, cysteine 127, cysteine 151, and cysteine 154. NAD(+) contacts are provided by residues 191-193 (GTS), 217-219 (NTK), and alanine 235.

This sequence belongs to the sirtuin family. Class III subfamily. The cofactor is Zn(2+).

Its subcellular location is the cytoplasm. The enzyme catalyses N(6)-acetyl-L-lysyl-[protein] + NAD(+) + H2O = 2''-O-acetyl-ADP-D-ribose + nicotinamide + L-lysyl-[protein]. The catalysed reaction is N(6)-succinyl-L-lysyl-[protein] + NAD(+) + H2O = 2''-O-succinyl-ADP-D-ribose + nicotinamide + L-lysyl-[protein]. In terms of biological role, NAD-dependent lysine deacetylase and desuccinylase that specifically removes acetyl and succinyl groups on target proteins. Modulates the activities of several proteins which are inactive in their acylated form. Deacetylates the N-terminal lysine residue of Alba, the major archaeal chromatin protein and that, in turn, increases Alba's DNA binding affinity, thereby repressing transcription. This is NAD-dependent protein deacylase from Thermococcus sibiricus (strain DSM 12597 / MM 739).